Consider the following 298-residue polypeptide: 4-diphosphocytidyl-2-C-methyl-D-erythritol kinase (298 aa).

Lysine 11 is an active-site residue. 94 to 104 (PMGGGLGGGSS) is a binding site for ATP. The active site involves aspartate 136.

Belongs to the GHMP kinase family. IspE subfamily.

The catalysed reaction is 4-CDP-2-C-methyl-D-erythritol + ATP = 4-CDP-2-C-methyl-D-erythritol 2-phosphate + ADP + H(+). It participates in isoprenoid biosynthesis; isopentenyl diphosphate biosynthesis via DXP pathway; isopentenyl diphosphate from 1-deoxy-D-xylulose 5-phosphate: step 3/6. Catalyzes the phosphorylation of the position 2 hydroxy group of 4-diphosphocytidyl-2C-methyl-D-erythritol. The chain is 4-diphosphocytidyl-2-C-methyl-D-erythritol kinase from Chromohalobacter salexigens (strain ATCC BAA-138 / DSM 3043 / CIP 106854 / NCIMB 13768 / 1H11).